The following is a 186-amino-acid chain: Elongation factor P (186 aa).

The protein belongs to the elongation factor P family.

The protein localises to the cytoplasm. Its pathway is protein biosynthesis; polypeptide chain elongation. Its function is as follows. Involved in peptide bond synthesis. Stimulates efficient translation and peptide-bond synthesis on native or reconstituted 70S ribosomes in vitro. Probably functions indirectly by altering the affinity of the ribosome for aminoacyl-tRNA, thus increasing their reactivity as acceptors for peptidyl transferase. This Streptococcus mutans serotype c (strain ATCC 700610 / UA159) protein is Elongation factor P.